Here is a 228-residue protein sequence, read N- to C-terminus: Flagellar L-ring protein (228 aa).

The signal sequence occupies residues 1-17; sequence MHYLRYFAIAFLLLLSS. The N-palmitoyl cysteine moiety is linked to residue Cys-18. A lipid anchor (S-diacylglycerol cysteine) is attached at Cys-18.

This sequence belongs to the FlgH family. As to quaternary structure, the basal body constitutes a major portion of the flagellar organelle and consists of four rings (L,P,S, and M) mounted on a central rod.

It is found in the cell membrane. The protein resides in the bacterial flagellum basal body. In terms of biological role, assembles around the rod to form the L-ring and probably protects the motor/basal body from shearing forces during rotation. This chain is Flagellar L-ring protein, found in Wigglesworthia glossinidia brevipalpis.